A 482-amino-acid chain; its full sequence is Anaerobic nitric oxide reductase flavorubredoxin (482 aa).

The segment at 30 to 210 (LRGSSYNSYL…PFSRLVTPKI (181 aa)) is zinc metallo-hydrolase. The Fe cation site is built by His79, Glu81, Asp83, His147, Asp166, and His227. In terms of domain architecture, Flavodoxin-like spans 254–393 (ITIFYDTMSN…LCRQHGRDIA (140 aa)). FMN-binding positions include 260–264 (TMSNN) and 342–369 (AFGS…EMSL). A Rubredoxin-like domain is found at 426–477 (GPSMQCSVCQWIYDPAKGEPLQDVAPGTPWSDVPDNFLCPECSLGKDVFDVL). Residues Cys431, Cys434, Cys464, and Cys467 each coordinate Fe cation.

The protein in the N-terminal section; belongs to the zinc metallo-hydrolase group 3 family. In terms of assembly, homotetramer. Fe cation is required as a cofactor. The cofactor is FMN.

It localises to the cytoplasm. It participates in nitrogen metabolism; nitric oxide reduction. Its function is as follows. Anaerobic nitric oxide reductase; uses NADH to detoxify nitric oxide (NO), protecting several 4Fe-4S NO-sensitive enzymes. Has at least 2 reductase partners, only one of which (NorW, flavorubredoxin reductase) has been identified. NO probably binds to the di-iron center; electrons enter from the NorW at rubredoxin and are transferred sequentially to the FMN center and the di-iron center. Also able to function as an aerobic oxygen reductase. The sequence is that of Anaerobic nitric oxide reductase flavorubredoxin from Citrobacter koseri (strain ATCC BAA-895 / CDC 4225-83 / SGSC4696).